The primary structure comprises 391 residues: GATA-binding factor 6-A (391 aa).

A disordered region spans residues 57-111 (GAHSVNSHWSQATSESSSFNNSSPHTSSRYHYPPSPPMHNGSTRDTGYSSSLTVS). Over residues 66 to 83 (SQATSESSSFNNSSPHTS) the composition is skewed to low complexity. The segment covering 96 to 111 (NGSTRDTGYSSSLTVS) has biased composition (polar residues). 2 consecutive GATA-type zinc fingers follow at residues 182–206 (CVNCGSVQTPLWRRDGTGHFLCNAC) and 236–260 (CANCHTSTTTLWRRNTEGEPVCNAC). The disordered stretch occupies residues 274–355 (AMKKEGIQTR…TESTSPNSNT (82 aa)). A compositionally biased stretch (basic residues) spans 282-291 (TRKRKPKTLN). The span at 292–319 (KSKSSSSNGNSSHQISMTPTSTTSSTNS) shows a compositional bias: low complexity. The segment covering 326-355 (GSPSQNTTPVVASSLMSTQQTESTSPNSNT) has biased composition (polar residues).

In embryos, expressed in the presumptive heart mesoderm. In adults, expressed at high levels in heart, small intestine, and stomach and at lower levels in lung, pancreas and colon.

Its subcellular location is the nucleus. In terms of biological role, transcriptional activator that binds 5'-GATA-3'-containing motifs within gene promoters. Regulates cardiac-specific transcription during embryogenesis and thereby cardiogenesis. The chain is GATA-binding factor 6-A (gata6-a) from Xenopus laevis (African clawed frog).